A 444-amino-acid polypeptide reads, in one-letter code: Probable glycine dehydrogenase (decarboxylating) subunit 1 (444 aa).

This sequence belongs to the GcvP family. N-terminal subunit subfamily. As to quaternary structure, the glycine cleavage system is composed of four proteins: P, T, L and H. In this organism, the P 'protein' is a heterodimer of two subunits.

It carries out the reaction N(6)-[(R)-lipoyl]-L-lysyl-[glycine-cleavage complex H protein] + glycine + H(+) = N(6)-[(R)-S(8)-aminomethyldihydrolipoyl]-L-lysyl-[glycine-cleavage complex H protein] + CO2. Its function is as follows. The glycine cleavage system catalyzes the degradation of glycine. The P protein binds the alpha-amino group of glycine through its pyridoxal phosphate cofactor; CO(2) is released and the remaining methylamine moiety is then transferred to the lipoamide cofactor of the H protein. This is Probable glycine dehydrogenase (decarboxylating) subunit 1 from Chlorobaculum parvum (strain DSM 263 / NCIMB 8327) (Chlorobium vibrioforme subsp. thiosulfatophilum).